Consider the following 86-residue polypeptide: Protein Tat (86 aa).

Residues 1–24 (MEPVDPRLEPWKHPGSQPKTACTN) form an interaction with human CREBBP region. The transactivation stretch occupies residues 1-48 (MEPVDPRLEPWKHPGSQPKTACTNCYCKKCCFHCQVCFITKALGISYG). Residues Cys22, Cys25, and Cys27 each contribute to the Zn(2+) site. The cysteine-rich stretch occupies residues 22-37 (CTNCYCKKCCFHCQVC). An N6-acetyllysine; by host PCAF modification is found at Lys28. Zn(2+) is bound by residues Cys30, His33, Cys34, and Cys37. The interval 38 to 48 (FITKALGISYG) is core. Basic residues predominate over residues 48–58 (GRKKRRQRRRA). Positions 48–86 (GRKKRRQRRRAPQGSQTHQVSLSKQPTSQSRGDPTGPKE) are disordered. The Nuclear localization signal, RNA-binding (TAR), and protein transduction motif lies at 49 to 57 (RKKRRQRRR). Residues 49 to 86 (RKKRRQRRRAPQGSQTHQVSLSKQPTSQSRGDPTGPKE) form an interaction with the host capping enzyme RNGTT region. N6-acetyllysine; by host EP300 and GCN5L2 occurs at positions 50 and 51. Asymmetric dimethylarginine; by host PRMT6 is present on residues Arg52 and Arg53. Residues 60–79 (QGSQTHQVSLSKQPTSQSRG) show a composition bias toward polar residues. Lys71 participates in a covalent cross-link: Glycyl lysine isopeptide (Lys-Gly) (interchain with G-Cter in ubiquitin). The short motif at 78–80 (RGD) is the Cell attachment site element.

This sequence belongs to the lentiviruses Tat family. As to quaternary structure, interacts with host CCNT1. Associates with the P-TEFb complex composed at least of Tat, P-TEFb (CDK9 and CCNT1), TAR RNA, RNA Pol II. Recruits the HATs CREBBP, TAF1/TFIID, EP300, PCAF and GCN5L2. Interacts with host KAT5/Tip60; this interaction targets the latter to degradation. Interacts with the host deacetylase SIRT1. Interacts with host capping enzyme RNGTT; this interaction stimulates RNGTT. Binds to host KDR, and to the host integrins ITGAV/ITGB3 and ITGA5/ITGB1. Interacts with host KPNB1/importin beta-1 without previous binding to KPNA1/importin alpha-1. Interacts with EIF2AK2. Interacts with host nucleosome assembly protein NAP1L1; this interaction may be required for the transport of Tat within the nucleus, since the two proteins interact at the nuclear rim. Interacts with host C1QBP/SF2P32; this interaction involves lysine-acetylated Tat. Interacts with the host chemokine receptors CCR2, CCR3 and CXCR4. Interacts with host DPP4/CD26; this interaction may trigger an anti-proliferative effect. Interacts with host LDLR. Interacts with the host extracellular matrix metalloproteinase MMP1. Interacts with host PRMT6; this interaction mediates Tat's methylation. Interacts with, and is ubiquitinated by MDM2/Hdm2. Interacts with host PSMC3 and HTATIP2. Interacts with STAB1; this interaction may overcome SATB1-mediated repression of IL2 and IL2RA (interleukin) in T cells by binding to the same domain than HDAC1. Interacts (when acetylated) with human CDK13, thereby increasing HIV-1 mRNA splicing and promoting the production of the doubly spliced HIV-1 protein Nef. Interacts with host TBP; this interaction modulates the activity of transcriptional pre-initiation complex. Interacts with host RELA. Interacts with host PLSCR1; this interaction negatively regulates Tat transactivation activity by altering its subcellular distribution. Post-translationally, asymmetrical arginine methylation by host PRMT6 seems to diminish the transactivation capacity of Tat and affects the interaction with host CCNT1. Acetylation by EP300, CREBBP, GCN5L2/GCN5 and PCAF regulates the transactivation activity of Tat. EP300-mediated acetylation of Lys-50 promotes dissociation of Tat from the TAR RNA through the competitive binding to PCAF's bromodomain. In addition, the non-acetylated Tat's N-terminus can also interact with PCAF. PCAF-mediated acetylation of Lys-28 enhances Tat's binding to CCNT1. Lys-50 is deacetylated by SIRT1. In terms of processing, polyubiquitination by host MDM2 does not target Tat to degradation, but activates its transactivation function and fosters interaction with CCNT1 and TAR RNA. Post-translationally, phosphorylated by EIF2AK2 on serine and threonine residues adjacent to the basic region important for TAR RNA binding and function. Phosphorylation of Tat by EIF2AK2 is dependent on the prior activation of EIF2AK2 by dsRNA.

Its subcellular location is the host nucleus. It is found in the host nucleolus. The protein localises to the host cytoplasm. It localises to the secreted. Functionally, transcriptional activator that increases RNA Pol II processivity, thereby increasing the level of full-length viral transcripts. Recognizes a hairpin structure at the 5'-LTR of the nascent viral mRNAs referred to as the transactivation responsive RNA element (TAR) and recruits the cyclin T1-CDK9 complex (P-TEFb complex) that will in turn hyperphosphorylate the RNA polymerase II to allow efficient elongation. The CDK9 component of P-TEFb and other Tat-activated kinases hyperphosphorylate the C-terminus of RNA Pol II that becomes stabilized and much more processive. Other factors such as HTATSF1/Tat-SF1, SUPT5H/SPT5, and HTATIP2 are also important for Tat's function. Besides its effect on RNA Pol II processivity, Tat induces chromatin remodeling of proviral genes by recruiting the histone acetyltransferases (HATs) CREBBP, EP300 and PCAF to the chromatin. This also contributes to the increase in proviral transcription rate, especially when the provirus integrates in transcriptionally silent region of the host genome. To ensure maximal activation of the LTR, Tat mediates nuclear translocation of NF-kappa-B by interacting with host RELA. Through its interaction with host TBP, Tat may also modulate transcription initiation. Tat can reactivate a latently infected cell by penetrating in it and transactivating its LTR promoter. In the cytoplasm, Tat is thought to act as a translational activator of HIV-1 mRNAs. In terms of biological role, extracellular circulating Tat can be endocytosed by surrounding uninfected cells via the binding to several surface receptors such as CD26, CXCR4, heparan sulfate proteoglycans (HSPG) or LDLR. Neurons are rarely infected, but they internalize Tat via their LDLR. Through its interaction with nuclear HATs, Tat is potentially able to control the acetylation-dependent cellular gene expression. Modulates the expression of many cellular genes involved in cell survival, proliferation or in coding for cytokines or cytokine receptors. Tat plays a role in T-cell and neurons apoptosis. Tat induced neurotoxicity and apoptosis probably contribute to neuroAIDS. Circulating Tat also acts as a chemokine-like and/or growth factor-like molecule that binds to specific receptors on the surface of the cells, affecting many cellular pathways. In the vascular system, Tat binds to ITGAV/ITGB3 and ITGA5/ITGB1 integrins dimers at the surface of endothelial cells and competes with bFGF for heparin-binding sites, leading to an excess of soluble bFGF. This is Protein Tat from Human immunodeficiency virus type 1 group M subtype B (isolate PCV12) (HIV-1).